The following is a 441-amino-acid chain: Xylose isomerase (441 aa).

Catalysis depends on residues H100 and D103. Positions 231, 267, 270, 295, 306, 308, and 338 each coordinate Mg(2+).

The protein belongs to the xylose isomerase family. Homotetramer. It depends on Mg(2+) as a cofactor.

The protein localises to the cytoplasm. The enzyme catalyses alpha-D-xylose = alpha-D-xylulofuranose. The protein is Xylose isomerase of Paraburkholderia phymatum (strain DSM 17167 / CIP 108236 / LMG 21445 / STM815) (Burkholderia phymatum).